We begin with the raw amino-acid sequence, 464 residues long: Keratin, type I cytoskeletal 28 (464 aa).

A head region spans residues 1–85 (MSLRFSSGSR…GSEGGLFSGN (85 aa)). The tract at residues 86–121 (EKVTMQNLNDRLASYLDNVRALEEANAELERKIKSW) is coil 1A. An IF rod domain is found at 86–401 (EKVTMQNLND…RLIDGDRNSC (316 aa)). The segment at 122–143 (YEKHGPGSCHGLDHDYSRYHLT) is linker 1. The tract at residues 144–235 (IEDLKNKIIS…KNHEEEVKAL (92 aa)) is coil 1B. The tract at residues 236 to 258 (QCVAGGNVNVEMNAAPGVDLTLL) is linker 12. A coil 2 region spans residues 259–397 (LNNMRAEYED…ETYCRLIDGD (139 aa)). The interval 398–464 (RNSCSKSKGF…NGKTKQRVPF (67 aa)) is tail. The span at 402–417 (SKSKGFGSGSPGNSSK) shows a compositional bias: low complexity. Disordered regions lie at residues 402 to 422 (SKSK…LSRT) and 440 to 464 (SSRV…RVPF).

It belongs to the intermediate filament family. As to quaternary structure, heterotetramer of two type I and two type II keratins.

The protein resides in the cytoplasm. In terms of biological role, essential for the proper assembly of types I and II keratin protein complexes and the formation of keratin intermediate filaments in the inner root sheath (irs). The sequence is that of Keratin, type I cytoskeletal 28 from Bos taurus (Bovine).